The following is a 483-amino-acid chain: Betaine aldehyde dehydrogenase (483 aa).

K(+) contacts are provided by Ile-27 and Asp-93. 149–151 (GAW) is an NAD(+) binding site. The Charge relay system role is filled by Lys-161. 175–178 (KPSE) contacts NAD(+). Val-179 is a binding site for K(+). 228–231 (SVPT) contributes to the NAD(+) binding site. Residue Val-243 participates in K(+) binding. Glu-249 functions as the Proton acceptor in the catalytic mechanism. NAD(+) contacts are provided by Gly-251, Cys-283, and Glu-380. Residue Cys-283 is the Nucleophile of the active site. Position 283 is a cysteine sulfenic acid (-SOH) (Cys-283). K(+) contacts are provided by Lys-450 and Gly-453. Glu-457 acts as the Charge relay system in catalysis.

Belongs to the aldehyde dehydrogenase family. Dimer of dimers. Requires K(+) as cofactor.

It catalyses the reaction betaine aldehyde + NAD(+) + H2O = glycine betaine + NADH + 2 H(+). It participates in amine and polyamine biosynthesis; betaine biosynthesis via choline pathway; betaine from betaine aldehyde: step 1/1. In terms of biological role, involved in the biosynthesis of the osmoprotectant glycine betaine. Catalyzes the irreversible oxidation of betaine aldehyde to the corresponding acid. The sequence is that of Betaine aldehyde dehydrogenase from Cereibacter sphaeroides (strain KD131 / KCTC 12085) (Rhodobacter sphaeroides).